A 365-amino-acid chain; its full sequence is Gibberellin 20 oxidase 1-B (365 aa).

Residues 199-299 (GNDSIMRLNY…RKSLAFFLCP (101 aa)) form the Fe2OG dioxygenase domain. Positions 224, 226, and 280 each coordinate Fe cation. The active site involves R290.

Belongs to the iron/ascorbate-dependent oxidoreductase family. GA20OX subfamily. The cofactor is Fe cation. L-ascorbate serves as cofactor. In terms of tissue distribution, not detected in nodes and the ear of the elongating stem.

The enzyme catalyses gibberellin A12 + 2 2-oxoglutarate + 3 O2 + H(+) = gibberellin A9 + 2 succinate + 3 CO2 + 2 H2O. It catalyses the reaction gibberellin A53 + 2 2-oxoglutarate + 3 O2 + H(+) = gibberellin A20 + 2 succinate + 3 CO2 + 2 H2O. Key oxidase enzyme in the biosynthesis of gibberellin that catalyzes the conversion of GA12 and GA53 to GA9 and GA20 respectively, via a three-step oxidation at C-20 of the GA skeleton. The chain is Gibberellin 20 oxidase 1-B (GA20ox1B) from Triticum aestivum (Wheat).